The following is an 862-amino-acid chain: Alpha,alpha-trehalose-phosphate synthase [UDP-forming] 5 (862 aa).

Serine 5 is modified (phosphoserine). Threonine 32 is modified (phosphothreonine). Residues 60–546 are glycosyltransferase; sequence DRIIIVGNQL…ARSFIQDLER (487 aa).

This sequence in the N-terminal section; belongs to the glycosyltransferase 20 family. The protein in the C-terminal section; belongs to the trehalose phosphatase family. As to quaternary structure, binds to the phosphopeptide-binding site of GRF/14-3-3 and to MBF1c. In terms of processing, both Ser-5 and Thr-32 must be phosphorylated for binding to GRF/14-3-3. As to expression, low expression in leaves, stems, flower buds, flowers and siliques.

It catalyses the reaction D-glucose 6-phosphate + UDP-alpha-D-glucose = alpha,alpha-trehalose 6-phosphate + UDP + H(+). The sequence is that of Alpha,alpha-trehalose-phosphate synthase [UDP-forming] 5 (TPS5) from Arabidopsis thaliana (Mouse-ear cress).